The following is a 108-amino-acid chain: Thioredoxin (108 aa).

The Thioredoxin domain maps to 2–108 (GKYFEATDKN…IAKKIDEHIG (107 aa)). Residues cysteine 32 and cysteine 35 are joined by a disulfide bond.

Belongs to the thioredoxin family.

In terms of biological role, participates in various redox reactions through the reversible oxidation of its active center dithiol to a disulfide and catalyzes dithiol-disulfide exchange reactions. The polypeptide is Thioredoxin (trxA) (Chlorobaculum thiosulfatiphilum (Chlorobium limicola f.sp. thiosulfatophilum)).